The following is a 320-amino-acid chain: Zygote arrest protein 1 (320 aa).

Disordered stretches follow at residues 106 to 130 and 155 to 208; these read ELRR…EVRY and DRPA…AEGS. A 3CxxC-type zinc finger spans residues 222–305; it reads KYGYYHCREC…RQDLCGRCKG (84 aa).

The protein belongs to the ZAR1 family.

Its subcellular location is the cytoplasm. The protein localises to the cytoplasmic ribonucleoprotein granule. Functionally, mRNA-binding protein required for maternal mRNA storage, translation and degradation during oocyte maturation. Probably promotes formation of some phase-separated membraneless compartment that stores maternal mRNAs in oocytes: acts by undergoing liquid-liquid phase separation upon binding to maternal mRNAs. Binds to the 3'-UTR of maternal mRNAs, inhibiting their translation. This chain is Zygote arrest protein 1, found in Takifugu rubripes (Japanese pufferfish).